The chain runs to 326 residues: Heterodimeric geranylgeranyl pyrophosphate synthase small subunit, chloroplastic (326 aa).

The N-terminal 33 residues, 1–33 (MLFSGSAIPLSSFCSLPEKPHTLPMKLSPAAIR), are a transit peptide targeting the chloroplast. 2 residues coordinate isopentenyl diphosphate: Lys-88 and His-120. The Mg(2+) site is built by Asp-127 and Asp-133. Dimethylallyl diphosphate is bound at residue Arg-138. Arg-139 contacts isopentenyl diphosphate. Lys-220 and Gln-258 together coordinate dimethylallyl diphosphate. The stretch at 274-301 (GAEKGMMEMAEELKEKAKKELQVFDNKY) forms a coiled coil.

This sequence belongs to the FPP/GGPP synthase family. In terms of assembly, part of a heterodimeric geranyl(geranyl)diphosphate synthase. Interacts with GGPPS1 or GGPPS2, but not with GGPPS9. Interacts with LIL3.1 and LIL3.2. Mg(2+) serves as cofactor. In terms of tissue distribution, expressed ubiquitously.

The protein localises to the plastid. It localises to the chloroplast thylakoid membrane. In terms of biological role, heterodimeric geranyl(geranyl)-diphosphate (GPP) synthase small subunit. The small subunit alone is inactive in vitro while the large subunit GGPPS1 catalyzes mainly the production of geranygeranyl-diphosphate in vitro. Upon association of the two subunits, the product profile changes and the production of gerany-diphosphate is strongly increased. The protein is Heterodimeric geranylgeranyl pyrophosphate synthase small subunit, chloroplastic (GGR) of Arabidopsis thaliana (Mouse-ear cress).